The following is a 369-amino-acid chain: Large ribosomal subunit protein uL4 (369 aa).

At threonine 2 the chain carries N-acetylthreonine.

This sequence belongs to the universal ribosomal protein uL4 family.

The polypeptide is Large ribosomal subunit protein uL4 (rpl4) (Dictyostelium discoideum (Social amoeba)).